The following is a 127-amino-acid chain: MAELIQKKLQGEVEKYQQLQKDLSKSMSGRQKLEAQLTENNIVKEELALLDGSNVVFKLLGPVLVKQELGEARATVGKRLDYITAEIKRYESQLRDLERQSEQQRETLAQLQQEFQRAQAAKAPGKA.

Ala2 is subject to N-acetylalanine. Position 21 is an N6-acetyllysine (Lys21). N6-acetyllysine; alternate is present on Lys66. Residue Lys66 forms a Glycyl lysine isopeptide (Lys-Gly) (interchain with G-Cter in SUMO1); alternate linkage. Residue Lys66 forms a Glycyl lysine isopeptide (Lys-Gly) (interchain with G-Cter in SUMO2); alternate linkage.

The protein belongs to the prefoldin subunit beta family. As to quaternary structure, heterohexamer of two PFD-alpha type and four PFD-beta type subunits. Component of the PAQosome complex which is responsible for the biogenesis of several protein complexes and which consists of R2TP complex members RUVBL1, RUVBL2, RPAP3 and PIH1D1, URI complex members PFDN2, PFDN6, PDRG1, UXT and URI1 as well as ASDURF, POLR2E and DNAAF10/WDR92.

Its function is as follows. Binds specifically to cytosolic chaperonin (c-CPN) and transfers target proteins to it. Binds to nascent polypeptide chain and promotes folding in an environment in which there are many competing pathways for nonnative proteins. The sequence is that of Prefoldin subunit 6 (Pfdn6) from Mus musculus (Mouse).